A 79-amino-acid polypeptide reads, in one-letter code: UPF0291 protein SAV1341 (79 aa).

The segment at 56 to 79 (IDPEGNDVTPEKIKEIQQKRDNKN) is disordered. The span at 64–79 (TPEKIKEIQQKRDNKN) shows a compositional bias: basic and acidic residues.

Belongs to the UPF0291 family.

It localises to the cytoplasm. The protein is UPF0291 protein SAV1341 of Staphylococcus aureus (strain Mu50 / ATCC 700699).